A 682-amino-acid polypeptide reads, in one-letter code: DNA-directed RNA polymerase subunit beta' (682 aa).

Zn(2+) contacts are provided by Cys-69, Cys-71, Cys-87, and Cys-90. Residues Asp-489, Asp-491, and Asp-493 each contribute to the Mg(2+) site.

The protein belongs to the RNA polymerase beta' chain family. RpoC1 subfamily. In terms of assembly, in plastids the minimal PEP RNA polymerase catalytic core is composed of four subunits: alpha, beta, beta', and beta''. When a (nuclear-encoded) sigma factor is associated with the core the holoenzyme is formed, which can initiate transcription. It depends on Mg(2+) as a cofactor. Requires Zn(2+) as cofactor.

The protein resides in the plastid. It is found in the chloroplast. It carries out the reaction RNA(n) + a ribonucleoside 5'-triphosphate = RNA(n+1) + diphosphate. Its function is as follows. DNA-dependent RNA polymerase catalyzes the transcription of DNA into RNA using the four ribonucleoside triphosphates as substrates. The polypeptide is DNA-directed RNA polymerase subunit beta' (Platanus occidentalis (Sycamore)).